A 157-amino-acid chain; its full sequence is Nicotinate dehydrogenase small FeS subunit (157 aa).

The 77-residue stretch at 4–80 (ITINLNLNGE…ESTIITLEGV (77 aa)) folds into the 2Fe-2S ferredoxin-type domain. The [2Fe-2S] cluster site is built by Cys-42, Cys-47, Cys-50, Cys-62, Cys-101, Cys-104, Cys-136, and Cys-138.

As to quaternary structure, heterooctamer of NDHM, NDHL, NDHS and NDHF. Dimer of heterotetramers. The cofactor is [2Fe-2S] cluster.

It carries out the reaction nicotinate + NADP(+) + H2O = 6-hydroxynicotinate + NADPH + H(+). The protein operates within cofactor degradation; nicotinate degradation; 6-hydroxynicotinate from nicotinate: step 1/1. Its activity is regulated as follows. Reversibly inactivated by selenide and sulfide. Not inhibited by cyanide. Its function is as follows. Catalyzes the hydroxylation of nicotinate to 6-hydroxynicotinate. Also active against 2-pyrazinecarboxylic acid, but inactive against other nicotinate analogs. This Eubacterium barkeri (Clostridium barkeri) protein is Nicotinate dehydrogenase small FeS subunit (ndhS).